Consider the following 288-residue polypeptide: Glucose-1-phosphate thymidylyltransferase (288 aa).

Gly-8 contributes to the dTDP-alpha-D-glucose binding site. Gly-8, Gly-11, Thr-12, Arg-13, Lys-23, Gln-24, Gln-80, Gly-85, and Asp-108 together coordinate dTTP. DTDP-alpha-D-glucose contacts are provided by Lys-23, Gln-24, Gln-80, Gly-85, Asp-108, Asn-109, Gly-143, Glu-158, Lys-159, Val-169, and Asp-222. A Mg(2+)-binding site is contributed by Asp-108. Asp-222 is a binding site for Mg(2+).

Belongs to the glucose-1-phosphate thymidylyltransferase family. It depends on Mg(2+) as a cofactor.

The catalysed reaction is dTTP + alpha-D-glucose 1-phosphate + H(+) = dTDP-alpha-D-glucose + diphosphate. Its pathway is carbohydrate biosynthesis; dTDP-L-rhamnose biosynthesis. In terms of biological role, catalyzes the conversion of glucose-1-phosphate and dTTP to dTDP-glucose and pyrophosphate. Involved in the biosynthesis of the dTDP-L-rhamnose which is a component of the critical linker, D-N-acetylglucosamine-L-rhamnose disaccharide, which connects the galactan region of arabinogalactan to peptidoglycan via a phosphodiester linkage. The sequence is that of Glucose-1-phosphate thymidylyltransferase (rmlA) from Mycobacterium tuberculosis (strain CDC 1551 / Oshkosh).